A 391-amino-acid chain; its full sequence is Arsenite methyltransferase (391 aa).

The tract at residues 1 to 126 (MELWTHPTPA…TMVADRDPEE (126 aa)) is disordered. The span at 28–39 (CSQPWATTPGTN) shows a compositional bias: polar residues. Positions 40 to 65 (SSDASRTPTTASASATSKPQSASARA) are enriched in low complexity. A compositionally biased stretch (polar residues) spans 102 to 116 (KRSTTCEATMSNDNE).

This sequence belongs to the methyltransferase superfamily. Arsenite methyltransferase family.

The enzyme catalyses arsenic triglutathione + [thioredoxin]-dithiol + S-adenosyl-L-methionine + 2 H2O = methylarsonous acid + [thioredoxin]-disulfide + 3 glutathione + S-adenosyl-L-homocysteine + H(+). It catalyses the reaction arsenic triglutathione + 2 [thioredoxin]-dithiol + 2 S-adenosyl-L-methionine + H2O = dimethylarsinous acid + 2 [thioredoxin]-disulfide + 3 glutathione + 2 S-adenosyl-L-homocysteine + 2 H(+). It carries out the reaction arsenic triglutathione + 3 [thioredoxin]-dithiol + 3 S-adenosyl-L-methionine = trimethylarsine + 3 [thioredoxin]-disulfide + 3 glutathione + 3 S-adenosyl-L-homocysteine + 3 H(+). Its function is as follows. Catalyzes the transfer of a methyl group from AdoMet to arsenite, producing methylated arsenicals. This is Arsenite methyltransferase from Halobacterium salinarum (strain ATCC 700922 / JCM 11081 / NRC-1) (Halobacterium halobium).